We begin with the raw amino-acid sequence, 301 residues long: Probable alpha-L-glutamate ligase (301 aa).

An ATP-grasp domain is found at 104–287 (MQLLSRKGIG…VAGLIIDFIE (184 aa)). Residues K141, 178 to 179 (EF), D187, and 211 to 213 (RSN) contribute to the ATP site. Positions 248, 260, and 262 each coordinate Mg(2+). Mn(2+)-binding residues include D248, E260, and N262.

This sequence belongs to the RimK family. Mg(2+) is required as a cofactor. Mn(2+) serves as cofactor.

This is Probable alpha-L-glutamate ligase from Aliivibrio fischeri (strain MJ11) (Vibrio fischeri).